The primary structure comprises 402 residues: uncharacterized protein (402 aa).

9 helical membrane-spanning segments follow: residues 13–33, 68–88, 108–128, 149–169, 223–243, 261–281, 283–303, 327–347, and 353–373; these read IGVL…VNLA, FFIQ…GMVV, LMAL…GDIL, LLIW…LTSF, LNYF…AAAA, LWMA…VTDK, ICLL…VVYL, YLMQ…GLYG, and AGVL…HLWL.

It localises to the cell membrane. In terms of biological role, involved in transport. This is an uncharacterized protein from Bacillus subtilis (strain 168).